An 858-amino-acid chain; its full sequence is Leucine--tRNA ligase (858 aa).

Residues 43 to 54 carry the 'HIGH' region motif; it reads PYPSGDGLHVGH. The 'KMSKS' region motif lies at 629–633; the sequence is KMSKS. Position 632 (K632) interacts with ATP.

The protein belongs to the class-I aminoacyl-tRNA synthetase family.

It localises to the cytoplasm. The enzyme catalyses tRNA(Leu) + L-leucine + ATP = L-leucyl-tRNA(Leu) + AMP + diphosphate. This is Leucine--tRNA ligase from Treponema denticola (strain ATCC 35405 / DSM 14222 / CIP 103919 / JCM 8153 / KCTC 15104).